Reading from the N-terminus, the 85-residue chain is MQTVTMYTGPFCPYCAMAKRLLHAAGVGHIDEIRVDASPEAFAEMQQLSGQRSVPQIFIGETHVGGFTDLYRLQQEGGLDGLLNP.

Residues 1-85 (MQTVTMYTGP…EGGLDGLLNP (85 aa)) enclose the Glutaredoxin domain. Cysteines 12 and 15 form a disulfide.

The protein belongs to the glutaredoxin family. Monomer.

It is found in the cytoplasm. Functionally, has a glutathione-disulfide oxidoreductase activity in the presence of NADPH and glutathione reductase. Reduces low molecular weight disulfides and proteins. This is Glutaredoxin (grx) from Neisseria meningitidis serogroup B (strain ATCC BAA-335 / MC58).